A 205-amino-acid chain; its full sequence is Urease accessory protein UreG 1 (205 aa).

14 to 21 (GPVGSGKT) is a binding site for GTP.

It belongs to the SIMIBI class G3E GTPase family. UreG subfamily. In terms of assembly, homodimer. UreD, UreF and UreG form a complex that acts as a GTP-hydrolysis-dependent molecular chaperone, activating the urease apoprotein by helping to assemble the nickel containing metallocenter of UreC. The UreE protein probably delivers the nickel.

It is found in the cytoplasm. Functionally, facilitates the functional incorporation of the urease nickel metallocenter. This process requires GTP hydrolysis, probably effectuated by UreG. The polypeptide is Urease accessory protein UreG 1 (Methylobacterium radiotolerans (strain ATCC 27329 / DSM 1819 / JCM 2831 / NBRC 15690 / NCIMB 10815 / 0-1)).